A 253-amino-acid chain; its full sequence is 5'-nucleotidase SurE (253 aa).

Positions 8, 9, 39, and 95 each coordinate a divalent metal cation.

It belongs to the SurE nucleotidase family. It depends on a divalent metal cation as a cofactor.

The protein localises to the cytoplasm. The catalysed reaction is a ribonucleoside 5'-phosphate + H2O = a ribonucleoside + phosphate. Functionally, nucleotidase that shows phosphatase activity on nucleoside 5'-monophosphates. This chain is 5'-nucleotidase SurE, found in Clostridium beijerinckii (strain ATCC 51743 / NCIMB 8052) (Clostridium acetobutylicum).